We begin with the raw amino-acid sequence, 172 residues long: MAKFQPKVQTEGQDDGMREKMIAVNRVTKVVKGGRILGFAALTVVGDGDGRVGMGKGKSKEVPAAVQKAMEECRRNLVKVSLKNGSIHHSVKGHHGAASVELHPAPKGTGIIAGGPMRAVFEVVGITDIVAKSHGSSNPYNMVRATFDALVNSTTPAEVAAKRGKSVEDIFA.

The 64-residue stretch at 17–80 (MREKMIAVNR…EECRRNLVKV (64 aa)) folds into the S5 DRBM domain.

The protein belongs to the universal ribosomal protein uS5 family. In terms of assembly, part of the 30S ribosomal subunit. Contacts proteins S4 and S8.

Functionally, with S4 and S12 plays an important role in translational accuracy. Its function is as follows. Located at the back of the 30S subunit body where it stabilizes the conformation of the head with respect to the body. This chain is Small ribosomal subunit protein uS5, found in Paracidovorax citrulli (strain AAC00-1) (Acidovorax citrulli).